Consider the following 89-residue polypeptide: DNA-directed RNA polymerase subunit Rpo6 (89 aa).

The protein belongs to the archaeal Rpo6/eukaryotic RPB6 RNA polymerase subunit family. In terms of assembly, part of the 13-subunit RNA polymerase complex.

It is found in the cytoplasm. The catalysed reaction is RNA(n) + a ribonucleoside 5'-triphosphate = RNA(n+1) + diphosphate. In terms of biological role, DNA-dependent RNA polymerase (RNAP) catalyzes the transcription of DNA into RNA using the four ribonucleoside triphosphates as substrates. Its function is as follows. Reconstitution experiments show this subunit is required for basic activity. The sequence is that of DNA-directed RNA polymerase subunit Rpo6 from Sulfolobus acidocaldarius (strain ATCC 33909 / DSM 639 / JCM 8929 / NBRC 15157 / NCIMB 11770).